A 262-amino-acid chain; its full sequence is Polyamine aminopropyltransferase (262 aa).

The PABS domain occupies Met1–Pro249. Asn29 contributes to the S-methyl-5'-thioadenosine binding site. Asp83 lines the spermidine pocket. Asp155 functions as the Proton acceptor in the catalytic mechanism.

Homodimer.

Its subcellular location is the cytoplasm. It catalyses the reaction S-adenosyl 3-(methylsulfanyl)propylamine + putrescine = S-methyl-5'-thioadenosine + spermidine + H(+). The protein operates within amine and polyamine biosynthesis; spermidine biosynthesis; spermidine from putrescine: step 1/1. Inhibited by methylglyoxal bis(cyclopentylamidinohydrazone)(MGBCP). Its function is as follows. Involved in the cell growth and proliferation. Catalyzes the irreversible transfer of a propylamine group from the amino donor S-adenosylmethioninamine (decarboxy-AdoMet) to putrescine (1,4-diaminobutane) to yield spermidine. Spermidine cannot be used as an aminopropyl acceptor. In Helicobacter pylori (strain ATCC 700392 / 26695) (Campylobacter pylori), this protein is Polyamine aminopropyltransferase.